We begin with the raw amino-acid sequence, 526 residues long: Probable feruloyl esterase B-2 (526 aa).

The N-terminal stretch at 1-18 (MTKLSLLPLLTLASAVLA) is a signal peptide. 2 disulfide bridges follow: cysteine 27–cysteine 74 and cysteine 62–cysteine 113. N-linked (GlcNAc...) asparagine glycosylation occurs at asparagine 52. An N-linked (GlcNAc...) asparagine glycan is attached at asparagine 137. Intrachain disulfides connect cysteine 186–cysteine 441, cysteine 255–cysteine 272, cysteine 281–cysteine 291, and cysteine 503–cysteine 525. The active-site Acyl-ester intermediate is serine 187. Residue asparagine 233 is glycosylated (N-linked (GlcNAc...) asparagine). Ca(2+) is bound by residues aspartate 256, aspartate 259, alanine 261, aspartate 263, and isoleucine 265. A glycan (N-linked (GlcNAc...) asparagine) is linked at asparagine 311. Active-site charge relay system residues include aspartate 400 and histidine 440. Asparagine 516 is a glycosylation site (N-linked (GlcNAc...) asparagine).

This sequence belongs to the tannase family.

The protein resides in the secreted. It carries out the reaction feruloyl-polysaccharide + H2O = ferulate + polysaccharide.. In terms of biological role, involved in degradation of plant cell walls. Hydrolyzes the feruloyl-arabinose ester bond in arabinoxylans as well as the feruloyl-galactose and feruloyl-arabinose ester bonds in pectin. This chain is Probable feruloyl esterase B-2 (faeB-2), found in Aspergillus fumigatus (strain CBS 144.89 / FGSC A1163 / CEA10) (Neosartorya fumigata).